Reading from the N-terminus, the 354-residue chain is MIVIFVDFDYFFAQVEEVLNPQYKGKPLVVCVYSGRTKTSGAVATANYEARKLGVKAGMPIIKAMQIAPSAIYVPMRKPIYEAFSNRIMNLLNKHADKIEVASIDEAYLDVTNKVEGNFENGIELARKIKQEILEKEKITVTVGVAPNKILAKIIADKSKPNGLGVIRPTEVQDFLNELDIDEIPGIGSVLARRLNELGIQKLRDILSKNYNELEKITGKAKALYLLKLAQNKYSEPVENKSKIPHGRYLTLPYNTRDVKVILPYLKKAINEAYNKVNGIPMRITVIAIMEDLDILSKGKKFKHGISIDNAYKVAEDLLRELLVRDKRRNVRRIGVKLDNIIINKTNLSDFFDI.

The region spanning 3 to 188 is the UmuC domain; sequence VIFVDFDYFF…LDIDEIPGIG (186 aa). Mg(2+) is bound by residues aspartate 7 and aspartate 105. Residue glutamate 106 is part of the active site.

Belongs to the DNA polymerase type-Y family. In terms of assembly, monomer. It depends on Mg(2+) as a cofactor.

It is found in the cytoplasm. It carries out the reaction DNA(n) + a 2'-deoxyribonucleoside 5'-triphosphate = DNA(n+1) + diphosphate. Functionally, poorly processive, error-prone DNA polymerase involved in untargeted mutagenesis. Copies undamaged DNA at stalled replication forks, which arise in vivo from mismatched or misaligned primer ends. These misaligned primers can be extended by PolIV. Exhibits no 3'-5' exonuclease (proofreading) activity. May be involved in translesional synthesis. The chain is DNA polymerase IV from Sulfolobus acidocaldarius (strain ATCC 33909 / DSM 639 / JCM 8929 / NBRC 15157 / NCIMB 11770).